Here is a 381-residue protein sequence, read N- to C-terminus: cAMP-dependent protein kinase type I-beta regulatory subunit (381 aa).

The interval 1 to 136 (MASPSCFHSE…ALAKAISKNV (136 aa)) is dimerization and phosphorylation. The residue at position 3 (Ser3) is a Phosphoserine. Tyr21 carries the post-translational modification 3'-nitrotyrosine. The tract at residues 66 to 88 (LARQKSNSQCDSHDEEISPTPPN) is disordered. Ser77 and Ser83 each carry phosphoserine. The residue at position 85 (Thr85) is a Phosphothreonine. The short motif at 96–100 (RRGGV) is the Pseudophosphorylation motif element. At Arg97 the chain carries Omega-N-methylarginine. Residues 137–254 (LFSH…SKVS), Glu202, Arg211, 255–381 (ILES…SLTV), Glu326, and Arg335 each bind 3',5'-cyclic AMP.

The protein belongs to the cAMP-dependent kinase regulatory chain family. The inactive holoenzyme is composed of two regulatory chains and two catalytic chains. Activation by cAMP releases the two active catalytic monomers and the regulatory dimer. Interacts with PRKX; regulates this cAMP-dependent protein kinase. Interacts with smAKAP; this interaction may target PRKAR1B to the plasma membrane. The pseudophosphorylation site binds to the substrate-binding region of the catalytic chain, resulting in the inhibition of its activity. Four types of regulatory chains are found: I-alpha, I-beta, II-alpha, and II-beta. Their expression varies among tissues and is in some cases constitutive and in others inducible.

The protein localises to the cell membrane. In terms of biological role, regulatory subunit of the cAMP-dependent protein kinases involved in cAMP signaling in cells. This chain is cAMP-dependent protein kinase type I-beta regulatory subunit (Prkar1b), found in Mus musculus (Mouse).